Consider the following 65-residue polypeptide: Carboxypeptidase A inhibitor (65 aa).

The protein belongs to the protease inhibitor I44 family.

The protein resides in the secreted. Functionally, inhibits carboxypeptidase A. In Ascaris suum (Pig roundworm), this protein is Carboxypeptidase A inhibitor.